Reading from the N-terminus, the 439-residue chain is Rhodopsin (439 aa).

Asparagine 1 carries N-linked (GlcNAc...) asparagine glycosylation. The Extracellular segment spans residues 1–26 (NETWWYNPYMDIHSHWKQFDQVPAAV). A helical transmembrane segment spans residues 27-51 (YYSLGIFIAICGIIGCAGNGIVIYL). The Cytoplasmic segment spans residues 52–63 (FTKTKSLQTPAN). Residues 64–90 (MFIINLAFSDFTFSLVNGFPMMTISCF) form a helical membrane-spanning segment. The Extracellular segment spans residues 91–102 (LKHWVFGQAACK). Cysteine 101 and cysteine 179 form a disulfide bridge. A helical transmembrane segment spans residues 103–124 (VYGLIGGIFGLTSIMTMTMISI). The 'Ionic lock' involved in activated form stabilization motif lies at 125–127 (DRY). The Cytoplasmic portion of the chain corresponds to 125–144 (DRYNVIRRPMSASKKMSHRK). A helical membrane pass occupies residues 145-165 (AFIMIVFVWIWSTIWAIGPIF). The Extracellular portion of the chain corresponds to 166–192 (GWGAYQLEGVLCNCSFDYITRDASTRS). Residues 193-217 (NIVCMYIFAFMFPIVVIFFCYFNIV) traverse the membrane as a helical segment. Topologically, residues 218 to 254 (MSVSNHEKEMAAMAKRLNAKELRKAQAGASAEMKLAK) are cytoplasmic. The chain crosses the membrane as a helical span at residues 255-276 (ISIVIVTQSLLSWSPYAIVALL). Over 277–286 (AQFGPIEWVT) the chain is Extracellular. Residues 287-308 (PYAAQLPVMFAKASAIHNPMIY) traverse the membrane as a helical segment. The residue at position 298 (lysine 298) is an N6-(retinylidene)lysine. The Cytoplasmic segment spans residues 309–439 (SVSHPKFREA…PQAAPPQGVD (131 aa)). S-palmitoyl cysteine attachment occurs at residues cysteine 329 and cysteine 330. Low complexity predominate over residues 369–381 (MMQKMQAQQQQQP). The tract at residues 369-439 (MMQKMQAQQQ…PQAAPPQGVD (71 aa)) is disordered. Over residues 382 to 433 (AYPPQGYPPQGYPPPPPQGYPPQGYPPQGYPPQGYPPPPQGPPPQGPPPQAA) the composition is skewed to pro residues.

Belongs to the G-protein coupled receptor 1 family. Opsin subfamily. Post-translationally, contains one covalently linked retinal chromophore. Upon light absorption, the covalently bound 11-cis-retinal is converted to all-trans-retinal. After hydrolysis of the Schiff base and release of the covalently bound all-trans-retinal, active rhodopsin is regenerated by binding of a fresh molecule of 11-cis-retinal.

The protein localises to the cell projection. Its subcellular location is the rhabdomere membrane. In terms of biological role, photoreceptor required for image-forming vision at low light intensity. Light-induced isomerization of 11-cis to all-trans retinal triggers a conformational change that activates signaling via G-proteins. Signaling mediates the activation of phospholipase C. Subsequent receptor phosphorylation mediates displacement of the bound G-protein alpha subunit by arrestin and terminates signaling. The sequence is that of Rhodopsin (RHO) from Alloteuthis subulata (Squid).